Here is a 180-residue protein sequence, read N- to C-terminus: Bifunctional protein PyrR (180 aa).

A PRPP-binding motif is present at residues 101–113 (VILVDDVLYTGRT).

This sequence belongs to the purine/pyrimidine phosphoribosyltransferase family. PyrR subfamily. In terms of assembly, homodimer and homohexamer; in equilibrium.

It catalyses the reaction UMP + diphosphate = 5-phospho-alpha-D-ribose 1-diphosphate + uracil. In terms of biological role, regulates transcriptional attenuation of the pyrimidine nucleotide (pyr) operon by binding in a uridine-dependent manner to specific sites on pyr mRNA. This disrupts an antiterminator hairpin in the RNA and favors formation of a downstream transcription terminator, leading to a reduced expression of downstream genes. Functionally, also displays a weak uracil phosphoribosyltransferase activity which is not physiologically significant. The sequence is that of Bifunctional protein PyrR from Bacillus cytotoxicus (strain DSM 22905 / CIP 110041 / 391-98 / NVH 391-98).